A 343-amino-acid polypeptide reads, in one-letter code: N-acetyl-gamma-glutamyl-phosphate reductase (343 aa).

Cys147 is a catalytic residue.

The protein belongs to the NAGSA dehydrogenase family. Type 1 subfamily.

It localises to the cytoplasm. It catalyses the reaction N-acetyl-L-glutamate 5-semialdehyde + phosphate + NADP(+) = N-acetyl-L-glutamyl 5-phosphate + NADPH + H(+). Its pathway is amino-acid biosynthesis; L-arginine biosynthesis; N(2)-acetyl-L-ornithine from L-glutamate: step 3/4. Its function is as follows. Catalyzes the NADPH-dependent reduction of N-acetyl-5-glutamyl phosphate to yield N-acetyl-L-glutamate 5-semialdehyde. The polypeptide is N-acetyl-gamma-glutamyl-phosphate reductase (Staphylococcus aureus (strain Mu3 / ATCC 700698)).